Here is a 209-residue protein sequence, read N- to C-terminus: Proteasome subunit beta (209 aa).

A propeptide spans 1-10 (MVEQSDTMKG) (removed in mature form; by autocatalysis). Threonine 11 serves as the catalytic Nucleophile.

It belongs to the peptidase T1B family. In terms of assembly, the 20S proteasome core is composed of 14 alpha and 14 beta subunits that assemble into four stacked heptameric rings, resulting in a barrel-shaped structure. The two inner rings, each composed of seven catalytic beta subunits, are sandwiched by two outer rings, each composed of seven alpha subunits. The catalytic chamber with the active sites is on the inside of the barrel. Has a gated structure, the ends of the cylinder being occluded by the N-termini of the alpha-subunits. Is capped at one or both ends by the proteasome regulatory ATPase, PAN.

Its subcellular location is the cytoplasm. The enzyme catalyses Cleavage of peptide bonds with very broad specificity.. The formation of the proteasomal ATPase PAN-20S proteasome complex, via the docking of the C-termini of PAN into the intersubunit pockets in the alpha-rings, triggers opening of the gate for substrate entry. Interconversion between the open-gate and close-gate conformations leads to a dynamic regulation of the 20S proteasome proteolysis activity. Functionally, component of the proteasome core, a large protease complex with broad specificity involved in protein degradation. In Methanospirillum hungatei JF-1 (strain ATCC 27890 / DSM 864 / NBRC 100397 / JF-1), this protein is Proteasome subunit beta.